The primary structure comprises 202 residues: Inner membrane-spanning protein YciB (202 aa).

Helical transmembrane passes span 47-67 (ILLATVVVIAATVAQIIWVHF), 75-95 (MLWVSLVLVVVFGGLTLAFQN), 101-121 (WKPTILYWVFAGSMIFSAFIL), 146-166 (LSWIGFFLFMGALNLFVAFNF), and 174-194 (FKLFGGMGLMLVFVLGQGMLL).

This sequence belongs to the YciB family.

The protein localises to the cell inner membrane. Functionally, plays a role in cell envelope biogenesis, maintenance of cell envelope integrity and membrane homeostasis. This chain is Inner membrane-spanning protein YciB, found in Dechloromonas aromatica (strain RCB).